The chain runs to 103 residues: Small ribosomal subunit protein uS10c (103 aa).

Belongs to the universal ribosomal protein uS10 family. As to quaternary structure, part of the 30S ribosomal subunit.

Its subcellular location is the plastid. It localises to the chloroplast. Functionally, involved in the binding of tRNA to the ribosomes. The chain is Small ribosomal subunit protein uS10c from Trieres chinensis (Marine centric diatom).